We begin with the raw amino-acid sequence, 159 residues long: Cytochrome c-type biogenesis protein CcmE (159 aa).

Topologically, residues 1 to 8 are cytoplasmic; that stretch reads MNIRRKNR. A helical; Signal-anchor for type II membrane protein membrane pass occupies residues 9-29; it reads LWIACAVLAGLALTIGLVLYA. Over 30 to 159 the chain is Periplasmic; the sequence is LRSNIDLFYT…PASVYKDPAS (130 aa). Heme contacts are provided by H130 and Y134. Over residues 134-147 the composition is skewed to basic and acidic residues; sequence YTPPEVEKAMEANH. The interval 134–159 is disordered; that stretch reads YTPPEVEKAMEANHRRPASVYKDPAS.

It belongs to the CcmE/CycJ family.

It is found in the cell inner membrane. Heme chaperone required for the biogenesis of c-type cytochromes. Transiently binds heme delivered by CcmC and transfers the heme to apo-cytochromes in a process facilitated by CcmF and CcmH. The sequence is that of Cytochrome c-type biogenesis protein CcmE from Escherichia coli (strain SMS-3-5 / SECEC).